The chain runs to 404 residues: NADH-quinone oxidoreductase subunit D (404 aa).

This sequence belongs to the complex I 49 kDa subunit family. NDH-1 is composed of 14 different subunits. Subunits NuoB, C, D, E, F, and G constitute the peripheral sector of the complex.

It is found in the cell inner membrane. It carries out the reaction a quinone + NADH + 5 H(+)(in) = a quinol + NAD(+) + 4 H(+)(out). Its function is as follows. NDH-1 shuttles electrons from NADH, via FMN and iron-sulfur (Fe-S) centers, to quinones in the respiratory chain. The immediate electron acceptor for the enzyme in this species is believed to be ubiquinone. Couples the redox reaction to proton translocation (for every two electrons transferred, four hydrogen ions are translocated across the cytoplasmic membrane), and thus conserves the redox energy in a proton gradient. The protein is NADH-quinone oxidoreductase subunit D of Leptospira borgpetersenii serovar Hardjo-bovis (strain JB197).